The chain runs to 84 residues: Acyl carrier protein MbtL (84 aa).

The 76-residue stretch at 6–81 (STVSTTLLSI…ELEAAIAAKY (76 aa)) folds into the Carrier domain. At Ser-41 the chain carries O-(pantetheine 4'-phosphoryl)serine.

Post-translationally, 4'-phosphopantetheine is transferred from CoA to a specific serine of apo-ACP, leading to the activated holo-ACP form.

It localises to the cytoplasm. It functions in the pathway siderophore biosynthesis; mycobactin biosynthesis. Acyl carrier protein involved in the formation of acyl-S-ACP intermediates within the mycobactin biosynthesis process. The aliphatic chains carried by ACP are subsequently transferred on to the mycobactin core by MbtK. The sequence is that of Acyl carrier protein MbtL (mbtL) from Mycobacterium bovis (strain ATCC BAA-935 / AF2122/97).